The sequence spans 145 residues: MTTVYDVPADLLINRVAEELKNDSKVKSPEWVNFVKTGVHKERRPENPDWWYVRAAALLRRVYIDGPVGVNSLRTHYGGKKDRGSRPEKFRRGSGAIIRRALQQLEESGLIKREENGRVITPEGRSFLDKAAAEVKKEVEGLERY.

It belongs to the eukaryotic ribosomal protein eS19 family. As to quaternary structure, part of the 30S ribosomal subunit.

Its function is as follows. May be involved in maturation of the 30S ribosomal subunit. The polypeptide is Small ribosomal subunit protein eS19 (Methanothermobacter thermautotrophicus (strain ATCC 29096 / DSM 1053 / JCM 10044 / NBRC 100330 / Delta H) (Methanobacterium thermoautotrophicum)).